The sequence spans 126 residues: uncharacterized protein (126 aa).

A run of 3 helical transmembrane segments spans residues 4-24 (LIIA…VNIL), 42-62 (AITI…IINP), and 64-84 (ISAS…SYTV).

Its subcellular location is the membrane. This is an uncharacterized protein from Saccharomyces cerevisiae (strain ATCC 204508 / S288c) (Baker's yeast).